The chain runs to 113 residues: Large ribosomal subunit protein bL17 (113 aa).

This sequence belongs to the bacterial ribosomal protein bL17 family. As to quaternary structure, part of the 50S ribosomal subunit. Contacts protein L32.

In Clostridium botulinum (strain ATCC 19397 / Type A), this protein is Large ribosomal subunit protein bL17.